The sequence spans 383 residues: Galactokinase (383 aa).

Residue 34 to 37 coordinates substrate; that stretch reads EHTD. 124–130 contributes to the ATP binding site; sequence GAGLSSS. Residues Ser-130 and Glu-162 each coordinate Mg(2+). Asp-174 functions as the Proton acceptor in the catalytic mechanism. A substrate-binding site is contributed by Tyr-223.

Belongs to the GHMP kinase family. GalK subfamily.

The protein localises to the cytoplasm. It catalyses the reaction alpha-D-galactose + ATP = alpha-D-galactose 1-phosphate + ADP + H(+). It participates in carbohydrate metabolism; galactose metabolism. Its function is as follows. Catalyzes the transfer of the gamma-phosphate of ATP to D-galactose to form alpha-D-galactose-1-phosphate (Gal-1-P). The sequence is that of Galactokinase from Yersinia pseudotuberculosis serotype O:1b (strain IP 31758).